The following is a 177-amino-acid chain: Adenylate kinase (177 aa).

ATP is bound at residue 13–18 (GCGKGT). The NMP stretch occupies residues 33–62 (SSGDIIREEMKKSSKEATVIREMVNSGRLA). Residues serine 34, arginine 39, 60 to 62 (RLA), 85 to 88 (GYPR), and glutamine 92 each bind AMP. Residues 119–127 (GRNEGRDDD) form an LID region. Residue arginine 120 coordinates ATP. Positions 124 and 135 each coordinate AMP.

This sequence belongs to the adenylate kinase family. As to quaternary structure, monomer.

It localises to the cytoplasm. The enzyme catalyses AMP + ATP = 2 ADP. In terms of biological role, catalyzes the reversible transfer of the terminal phosphate group between ATP and AMP. Plays an important role in cellular energy homeostasis and in adenine nucleotide metabolism. The protein is Adenylate kinase of Encephalitozoon cuniculi (strain GB-M1) (Microsporidian parasite).